The primary structure comprises 104 residues: Large ribosomal subunit protein uL24 (104 aa).

The protein belongs to the universal ribosomal protein uL24 family. In terms of assembly, part of the 50S ribosomal subunit.

One of two assembly initiator proteins, it binds directly to the 5'-end of the 23S rRNA, where it nucleates assembly of the 50S subunit. Its function is as follows. One of the proteins that surrounds the polypeptide exit tunnel on the outside of the subunit. The protein is Large ribosomal subunit protein uL24 of Buchnera aphidicola subsp. Acyrthosiphon pisum (strain 5A).